The primary structure comprises 755 residues: E3 ubiquitin-protein ligase TRIM56 (755 aa).

The RING-type zinc finger occupies 21 to 60 (CKICLEQLRAPKTLPCLHTYCQDCLAQLADGGRVRCPECR). 2 B box-type zinc fingers span residues 98-149 (KPAC…VVDL) and 164-205 (RQAA…CLPL). Residues Cys169, His172, Cys192, and His197 each contribute to the Zn(2+) site. A coiled-coil region spans residues 216–314 (LEGLLAGVDN…AAAFARRVLS (99 aa)). Residues 371-484 (EEQQPQKDGG…SPALGPNLDG (114 aa)) form a disordered region. Over residues 392 to 404 (SQSRREDEPKTER) the composition is skewed to basic and acidic residues. Thr418 and Thr442 each carry phosphothreonine. The segment covering 419–447 (PKEEKAQTTREEGAQTLEEDRAQTPHEDG) has biased composition (basic and acidic residues). Basic residues predominate over residues 453–469 (RGGRPNKKKKFKGRLKS). At Ser475 the chain carries Phosphoserine.

Belongs to the TRIM/RBCC family. Homooligomer. Interacts with STING1. Interacts with TICAM1. In terms of processing, (Microbial infection) Preferentially ubiquitinated with 'Lys-48' and 'Lys-11'-linked ubiquitin chains by Salmonella effector SopA leading to proteasomal targeting and degradation. Post-translationally, autoubiquitinated. In terms of tissue distribution, widely expressed (at protein level).

It is found in the cytoplasm. It catalyses the reaction S-ubiquitinyl-[E2 ubiquitin-conjugating enzyme]-L-cysteine + [acceptor protein]-L-lysine = [E2 ubiquitin-conjugating enzyme]-L-cysteine + N(6)-ubiquitinyl-[acceptor protein]-L-lysine.. The protein operates within protein modification; protein ubiquitination. Its function is as follows. E3 ubiquitin-protein ligase that plays a key role in innate antiviral immunity by mediating ubiquitination of CGAS and STING1. In response to pathogen- and host-derived double-stranded DNA (dsDNA), targets STING1 to 'Lys-63'-linked ubiquitination, thereby promoting its homodimerization, a step required for the production of type I interferon IFN-beta. Also mediate monoubiquitination of CGAS, thereby promoting CGAS oligomerization and subsequent activation. Promotes also TNFalpha-induced NF-kappa-B signaling by mediating 'Lys-63'-linked ubiquitination TAK1, leading to enhanced interaction between TAK1 and CHUK/IKKalpha. Independently of its E3 ubiquitin ligase activity, positive regulator of TLR3 signaling. Potentiates extracellular double stranded RNA (dsRNA)-induced expression of IFNB1 and interferon-stimulated genes ISG15, IFIT1/ISG56, CXCL10, OASL and CCL5/RANTES. Promotes establishment of an antiviral state by TLR3 ligand and TLR3-mediated chemokine induction following infection by hepatitis C virus. Acts as a restriction factor of Zika virus through direct interaction with the viral RNA via its C-terminal region. In Homo sapiens (Human), this protein is E3 ubiquitin-protein ligase TRIM56.